A 266-amino-acid chain; its full sequence is Small ribosomal subunit protein uS3 (266 aa).

The KH type-2 domain occupies 39 to 107 (VREYLKKKLK…PVHVNIEEIR (69 aa)). The tract at residues 218 to 266 (EVAEDKRPRRNARPGDRRPRRDGEGGAPGARRGAPRRGAGKPEDGKTGE) is disordered. Basic and acidic residues-rich tracts occupy residues 230–241 (RPGDRRPRRDGE) and 257–266 (GKPEDGKTGE).

Belongs to the universal ribosomal protein uS3 family. In terms of assembly, part of the 30S ribosomal subunit. Forms a tight complex with proteins S10 and S14.

Functionally, binds the lower part of the 30S subunit head. Binds mRNA in the 70S ribosome, positioning it for translation. In Burkholderia multivorans (strain ATCC 17616 / 249), this protein is Small ribosomal subunit protein uS3.